Here is a 316-residue protein sequence, read N- to C-terminus: tRNA uridine(34) hydroxylase (316 aa).

The 95-residue stretch at 123–217 folds into the Rhodanese domain; that stretch reads LSDDTVVIDA…YGKDPETKGE (95 aa). The active-site Cysteine persulfide intermediate is cysteine 177.

This sequence belongs to the TrhO family.

It catalyses the reaction uridine(34) in tRNA + AH2 + O2 = 5-hydroxyuridine(34) in tRNA + A + H2O. Its function is as follows. Catalyzes oxygen-dependent 5-hydroxyuridine (ho5U) modification at position 34 in tRNAs. This chain is tRNA uridine(34) hydroxylase, found in Staphylococcus saprophyticus subsp. saprophyticus (strain ATCC 15305 / DSM 20229 / NCIMB 8711 / NCTC 7292 / S-41).